Reading from the N-terminus, the 382-residue chain is Galactokinase (382 aa).

Substrate is bound at residue 34 to 37 (EHTD). 124 to 130 (GAGLSSS) is a binding site for ATP. Residues S130 and E162 each coordinate Mg(2+). The active-site Proton acceptor is D174. Position 223 (Y223) interacts with substrate.

The protein belongs to the GHMP kinase family. GalK subfamily.

It is found in the cytoplasm. It carries out the reaction alpha-D-galactose + ATP = alpha-D-galactose 1-phosphate + ADP + H(+). Its pathway is carbohydrate metabolism; galactose metabolism. Its function is as follows. Catalyzes the transfer of the gamma-phosphate of ATP to D-galactose to form alpha-D-galactose-1-phosphate (Gal-1-P). This is Galactokinase from Shigella flexneri serotype 5b (strain 8401).